The chain runs to 160 residues: Eukaryotic translation initiation factor 5A-2 (160 aa).

The span at 1–12 (MSDEEHHFESKA) shows a compositional bias: basic and acidic residues. The interval 1-21 (MSDEEHHFESKADAGASKTFP) is disordered. At Lys-52 the chain carries Hypusine.

It belongs to the eIF-5A family. Post-translationally, lys-52 undergoes hypusination, a unique post-translational modification that consists in the addition of a butylamino group from spermidine to lysine side chain, leading to the formation of the unusual amino acid hypusine. eIF-5As are the only known proteins to undergo this modification, which is essential for their function.

Translation factor that promotes translation elongation and termination, particularly upon ribosome stalling at specific amino acid sequence contexts. Binds between the exit (E) and peptidyl (P) site of the ribosome and promotes rescue of stalled ribosome: specifically required for efficient translation of polyproline-containing peptides as well as other motifs that stall the ribosome. Acts as a ribosome quality control (RQC) cofactor by joining the RQC complex to facilitate peptidyl transfer during CAT tailing step. This Solanum lycopersicum (Tomato) protein is Eukaryotic translation initiation factor 5A-2.